The following is a 438-amino-acid chain: GTPase Der (438 aa).

2 EngA-type G domains span residues 4 to 168 and 177 to 352; these read PLVT…KSEG and IKIA…DNYS. GTP is bound by residues 10–17, 57–61, 120–123, 183–190, 230–234, and 295–298; these read GRPNVGKS, DTGGI, NKID, GKPNVGKS, DTAGL, and NKWD. The 85-residue stretch at 353–437 folds into the KH-like domain; the sequence is KRIATGVLND…GIKMIFKERK (85 aa).

Belongs to the TRAFAC class TrmE-Era-EngA-EngB-Septin-like GTPase superfamily. EngA (Der) GTPase family. As to quaternary structure, associates with the 50S ribosomal subunit.

Functionally, GTPase that plays an essential role in the late steps of ribosome biogenesis. The sequence is that of GTPase Der from Clostridium acetobutylicum (strain ATCC 824 / DSM 792 / JCM 1419 / IAM 19013 / LMG 5710 / NBRC 13948 / NRRL B-527 / VKM B-1787 / 2291 / W).